The sequence spans 588 residues: 3-methylmercaptopropionyl-CoA dehydrogenase (588 aa).

Catalysis depends on Glu435, which acts as the Proton acceptor.

Belongs to the acyl-CoA dehydrogenase family. It depends on FAD as a cofactor.

It catalyses the reaction 3-(methylsulfanyl)propanoyl-CoA + oxidized [electron-transfer flavoprotein] + H(+) = 3-(methylsulfanyl)acryloyl-CoA + reduced [electron-transfer flavoprotein]. Functionally, involved in the assimilation of dimethylsulphoniopropionate (DMSP), an important compound in the fixation of carbon in marine phytoplankton, by mediating the conversion of 3-(methylthio)propanoyl-CoA (MMPA-CoA) to 3-(methylthio)acryloyl-CoA (MTA-CoA). This Ruegeria pomeroyi (strain ATCC 700808 / DSM 15171 / DSS-3) (Silicibacter pomeroyi) protein is 3-methylmercaptopropionyl-CoA dehydrogenase.